We begin with the raw amino-acid sequence, 1141 residues long: IgM protease (1141 aa).

The signal sequence occupies residues 1–32 (MNIQERFSLRKSAVGLVSVSLLCAIYTSTVAA). The Nucleophile role is filled by Cys-195. Disordered regions lie at residues 518 to 544 (PDLP…STNL), 725 to 749 (EKDS…NVET), 781 to 805 (LEKD…TNVE), and 839 to 860 (EKDS…ESTS). The span at 526-544 (STVSDVDSLSSQETSSTNL) shows a compositional bias: polar residues. Low complexity-rich tracts occupy residues 738-749 (EPTSSESTNVET) and 795-805 (EPTSSESTNVE). Residues 1119–1136 (IMGVGLLTLVLGSALGLL) form a helical membrane-spanning segment.

This sequence belongs to the peptidase C66 family.

Its subcellular location is the cell membrane. The protein resides in the secreted. IgM cleavage is inhibited by iodoacetamide but not by AEBSF, bestatin, E-64, Z-LVG-CHN(2), or EDTA. Catalyzes the specific cleavage of porcine IgM bound to the bacterial surface. Can degrade only IgM but neither IgG nor IgA, and is host specific, as it exclusively cleaves porcine IgM but not IgM from six other species, including human, mouse and a closely related member of the Suidae family. Promotes survival in porcine blood. Is thus involved in a so-far-unknown mechanism of host-pathogen interaction at an early stage of the host immune response. The sequence is that of IgM protease (ide) from Streptococcus suis (strain P1/7).